We begin with the raw amino-acid sequence, 157 residues long: Glycine-rich RNA-binding, abscisic acid-inducible protein (157 aa).

The RRM domain maps to 8–86 (YRCFVGGLAW…RNITVNQAQS (79 aa)). Residues 82 to 157 (NQAQSRGGGG…YGGGGGGWRD (76 aa)) are disordered. The segment covering 87–157 (RGGGGGGGGY…YGGGGGGWRD (71 aa)) has biased composition (gly residues).

Possibly has a role in RNA transcription or processing during stress. This Zea mays (Maize) protein is Glycine-rich RNA-binding, abscisic acid-inducible protein (RAB15).